Here is a 485-residue protein sequence, read N- to C-terminus: Glutamyl-tRNA(Gln) amidotransferase subunit A (485 aa).

Residues Lys-79 and Ser-154 each act as charge relay system in the active site. Ser-178 serves as the catalytic Acyl-ester intermediate.

It belongs to the amidase family. GatA subfamily. In terms of assembly, heterotrimer of A, B and C subunits.

The enzyme catalyses L-glutamyl-tRNA(Gln) + L-glutamine + ATP + H2O = L-glutaminyl-tRNA(Gln) + L-glutamate + ADP + phosphate + H(+). Allows the formation of correctly charged Gln-tRNA(Gln) through the transamidation of misacylated Glu-tRNA(Gln) in organisms which lack glutaminyl-tRNA synthetase. The reaction takes place in the presence of glutamine and ATP through an activated gamma-phospho-Glu-tRNA(Gln). The sequence is that of Glutamyl-tRNA(Gln) amidotransferase subunit A from Carboxydothermus hydrogenoformans (strain ATCC BAA-161 / DSM 6008 / Z-2901).